Consider the following 388-residue polypeptide: MSRMNYVFTSESVSEGHPDKLCDRVSDAVLDTFLAEEPTARVACETFATTGRVVVGGEVGLSDPQKLDEFMERVDGIVRDCVKDIGYEQQEFHWRTIEVQNFLHRQSAHIAQGVDKDGAGDQGIMFGYACRETPELMPAPIQYSHAILRRLAEVRKSGQEPDLRPDAKSQLSLRYENGKPVEVRSIVLSTQHAHEEQTSDDIRAIVEPYIREVLPEGWITEATEWWVNPTGTFVIGGPDGDAGLTGRKIIVDTYGGAAPHGGGAFSGKDPTKVDRSAAYAARYLAKNVVAAGLAERCTLQVSYAIGVAKPLSIYVDTHGTGQVDAAQIEKAVADCMDLTPRGIREHLNLCRPIYARTSAYGHFGRAPEADGGFSWERTDLTDALLKAV.

Position 17 (H17) interacts with ATP. Mg(2+) is bound at residue D19. E45 contacts K(+). L-methionine is bound by residues E58 and Q106. The interval 106-116 is flexible loop; that stretch reads QSAHIAQGVDK. ATP is bound by residues 166-168, D241, 247-248, A264, and K268; these read DAK and RK. Residue D241 participates in L-methionine binding. K272 serves as a coordination point for L-methionine.

It belongs to the AdoMet synthase family. As to quaternary structure, homotetramer; dimer of dimers. Requires Mg(2+) as cofactor. The cofactor is K(+).

It localises to the cytoplasm. The catalysed reaction is L-methionine + ATP + H2O = S-adenosyl-L-methionine + phosphate + diphosphate. It participates in amino-acid biosynthesis; S-adenosyl-L-methionine biosynthesis; S-adenosyl-L-methionine from L-methionine: step 1/1. Functionally, catalyzes the formation of S-adenosylmethionine (AdoMet) from methionine and ATP. The overall synthetic reaction is composed of two sequential steps, AdoMet formation and the subsequent tripolyphosphate hydrolysis which occurs prior to release of AdoMet from the enzyme. The chain is S-adenosylmethionine synthase from Cereibacter sphaeroides (strain ATCC 17023 / DSM 158 / JCM 6121 / CCUG 31486 / LMG 2827 / NBRC 12203 / NCIMB 8253 / ATH 2.4.1.) (Rhodobacter sphaeroides).